Here is a 54-residue protein sequence, read N- to C-terminus: Lectin alpha-1 chain (54 aa).

It belongs to the leguminous lectin family. Tetramer of two alpha and two beta chains.

The protein is Lectin alpha-1 chain of Lathyrus hirsutus (Rough pea).